A 198-amino-acid chain; its full sequence is FMN-dependent NADH:quinone oxidoreductase (198 aa).

FMN contacts are provided by residues 92–95 (MWNL) and 136–139 (SRGG).

This sequence belongs to the azoreductase type 1 family. As to quaternary structure, homodimer. Requires FMN as cofactor.

It carries out the reaction 2 a quinone + NADH + H(+) = 2 a 1,4-benzosemiquinone + NAD(+). The catalysed reaction is N,N-dimethyl-1,4-phenylenediamine + anthranilate + 2 NAD(+) = 2-(4-dimethylaminophenyl)diazenylbenzoate + 2 NADH + 2 H(+). Functionally, quinone reductase that provides resistance to thiol-specific stress caused by electrophilic quinones. In terms of biological role, also exhibits azoreductase activity. Catalyzes the reductive cleavage of the azo bond in aromatic azo compounds to the corresponding amines. In Clostridium perfringens (strain SM101 / Type A), this protein is FMN-dependent NADH:quinone oxidoreductase.